A 676-amino-acid polypeptide reads, in one-letter code: Protein kinase C delta type (676 aa).

A C2 domain is found at 1–106 (MAPFLRIAFN…KNNGKAEFWL (106 aa)). Threonine 43 and threonine 50 each carry phosphothreonine. Residue tyrosine 64 is modified to Phosphotyrosine. Serine 130 carries the phosphoserine modification. At threonine 141 the chain carries Phosphothreonine. Tyrosine 155 is subject to Phosphotyrosine. The Phorbol-ester/DAG-type 1 zinc finger occupies 158–208 (NHEFIATFFGQPTFCSVCKDFVWGLNKQGYKCRQCNAAIHKKCIDKIIGRC). At threonine 218 the chain carries Phosphothreonine. The segment at 230-280 (PHRFKVHNYMSPTFCDHCGSLLWGLVKQGLKCEDCGMNVHHKCREKVANLC) adopts a Phorbol-ester/DAG-type 2 zinc-finger fold. Serine 299, serine 302, and serine 304 each carry phosphoserine; by autocatalysis. Serine 307 carries the post-translational modification Phosphoserine. Tyrosine 313 carries the phosphotyrosine modification. Tyrosine 334 is modified (phosphotyrosine; by SRC). One can recognise a Protein kinase domain in the interval 349–603 (FIFHKVLGKG…TGNIKIHPFF (255 aa)). 355–363 (LGKGSFGKV) lines the ATP pocket. Position 374 is a phosphotyrosine (tyrosine 374). Lysine 378 lines the ATP pocket. At threonine 451 the chain carries Phosphothreonine. Aspartate 473 acts as the Proton acceptor in catalysis. Phosphoserine occurs at positions 503 and 506. Phosphothreonine; by autocatalysis is present on threonine 507. Tyrosine 567 bears the Phosphotyrosine mark. An AGC-kinase C-terminal domain is found at 604 to 675 (KTINWTLLEK…VNPKFEHLLE (72 aa)). 4 positions are modified to phosphoserine: serine 645, serine 654, serine 658, and serine 664.

This sequence belongs to the protein kinase superfamily. AGC Ser/Thr protein kinase family. PKC subfamily. In terms of assembly, interacts with PDPK1 (via N-terminal region). Interacts with RAD9A. Interacts with CDCP1. Interacts with MUC1. Interacts with VASP. Interacts with CAVIN3. Interacts with PRKD2 (via N-terminus and zing-finger domain 1 and 2) in response to oxidative stress; the interaction is independent of PRKD2 tyrosine phosphorylation. Interacts with PLSC3; interaction is enhanced by UV irradiation. Interacts with PRKCH upstream open reading frame 2; the interaction leads to inhibition of kinase activity. In terms of processing, autophosphorylated and/or phosphorylated at Thr-507, within the activation loop; phosphorylation at Thr-507 is not a prerequisite for enzymatic activity. Autophosphorylated at Ser-299, Ser-302 and Ser-304. Upon TNFSF10/TRAIL treatment, phosphorylated at Tyr-155; phosphorylation is required for its translocation to the endoplasmic reticulum and cleavage by caspase-3. Phosphorylated at Tyr-313, Tyr-334 and Tyr-567; phosphorylation of Tyr-313 and Tyr-567 following thrombin or zymosan stimulation potentiates its kinase activity. Phosphorylated by protein kinase PDPK1; phosphorylation is inhibited by the apoptotic C-terminal cleavage product of PKN2. Phosphorylated at Tyr-313 through a SYK and SRC mechanism downstream of C-type lectin receptors activation, promoting its activation. Proteolytically cleaved into a catalytic subunit and a regulatory subunit by caspase-3 during apoptosis which results in kinase activation.

Its subcellular location is the cytoplasm. It is found in the perinuclear region. It localises to the nucleus. The protein resides in the cell membrane. The protein localises to the mitochondrion. Its subcellular location is the endomembrane system. It catalyses the reaction L-seryl-[protein] + ATP = O-phospho-L-seryl-[protein] + ADP + H(+). It carries out the reaction L-threonyl-[protein] + ATP = O-phospho-L-threonyl-[protein] + ADP + H(+). The catalysed reaction is L-tyrosyl-[protein] + ATP = O-phospho-L-tyrosyl-[protein] + ADP + H(+). Its activity is regulated as follows. Novel PKCs (PRKCD, PRKCE, PRKCH and PRKCQ) are calcium-insensitive, but activated by diacylglycerol (DAG) and phosphatidylserine. Three specific sites; Thr-507 (activation loop of the kinase domain), Ser-645 (turn motif) and Ser-664 (hydrophobic region), need to be phosphorylated for its full activation. Activated by caspase-3 (CASP3) cleavage during apoptosis. After cleavage, the pseudosubstrate motif in the regulatory subunit is released from the substrate recognition site of the catalytic subunit, which enables PRKCD to become constitutively activated. The catalytic subunit which displays properties of a sphingosine-dependent protein kinase is activated by D-erythro-sphingosine (Sph) or N,N-dimethyl-D-erythrosphingosine (DMS) or N,N,N-trimethyl-D-erythrosphingosine (TMS), but not by ceramide or Sph-1-P and is strongly inhibited by phosphatidylserine. Inhibited by PRKCH upstream open reading frame 2. Calcium-independent, phospholipid- and diacylglycerol (DAG)-dependent serine/threonine-protein kinase that plays contrasting roles in cell death and cell survival by functioning as a pro-apoptotic protein during DNA damage-induced apoptosis, but acting as an anti-apoptotic protein during cytokine receptor-initiated cell death, is involved in tumor suppression as well as survival of several cancers, is required for oxygen radical production by NADPH oxidase and acts as positive or negative regulator in platelet functional responses. Negatively regulates B cell proliferation and also has an important function in self-antigen induced B cell tolerance induction. Upon DNA damage, activates the promoter of the death-promoting transcription factor BCLAF1/Btf to trigger BCLAF1-mediated p53/TP53 gene transcription and apoptosis. In response to oxidative stress, interact with and activate CHUK/IKKA in the nucleus, causing the phosphorylation of p53/TP53. In the case of ER stress or DNA damage-induced apoptosis, can form a complex with the tyrosine-protein kinase ABL1 which trigger apoptosis independently of p53/TP53. In cytosol can trigger apoptosis by activating MAPK11 or MAPK14, inhibiting AKT1 and decreasing the level of X-linked inhibitor of apoptosis protein (XIAP), whereas in nucleus induces apoptosis via the activation of MAPK8 or MAPK9. Upon ionizing radiation treatment, is required for the activation of the apoptosis regulators BAX and BAK, which trigger the mitochondrial cell death pathway. Can phosphorylate MCL1 and target it for degradation which is sufficient to trigger for BAX activation and apoptosis. Is required for the control of cell cycle progression both at G1/S and G2/M phases. Mediates phorbol 12-myristate 13-acetate (PMA)-induced inhibition of cell cycle progression at G1/S phase by up-regulating the CDK inhibitor CDKN1A/p21 and inhibiting the cyclin CCNA2 promoter activity. In response to UV irradiation can phosphorylate CDK1, which is important for the G2/M DNA damage checkpoint activation. Can protect glioma cells from the apoptosis induced by TNFSF10/TRAIL, probably by inducing increased phosphorylation and subsequent activation of AKT1. Is highly expressed in a number of cancer cells and promotes cell survival and resistance against chemotherapeutic drugs by inducing cyclin D1 (CCND1) and hyperphosphorylation of RB1, and via several pro-survival pathways, including NF-kappa-B, AKT1 and MAPK1/3 (ERK1/2). Involved in antifungal immunity by mediating phosphorylation and activation of CARD9 downstream of C-type lectin receptors activation, promoting interaction between CARD9 and BCL10, followed by activation of NF-kappa-B and MAP kinase p38 pathways. Can also act as tumor suppressor upon mitogenic stimulation with PMA or TPA. In N-formyl-methionyl-leucyl-phenylalanine (fMLP)-treated cells, is required for NCF1 (p47-phox) phosphorylation and activation of NADPH oxidase activity, and regulates TNF-elicited superoxide anion production in neutrophils, by direct phosphorylation and activation of NCF1 or indirectly through MAPK1/3 (ERK1/2) signaling pathways. May also play a role in the regulation of NADPH oxidase activity in eosinophil after stimulation with IL5, leukotriene B4 or PMA. In collagen-induced platelet aggregation, acts a negative regulator of filopodia formation and actin polymerization by interacting with and negatively regulating VASP phosphorylation. Downstream of PAR1, PAR4 and CD36/GP4 receptors, regulates differentially platelet dense granule secretion; acts as a positive regulator in PAR-mediated granule secretion, whereas it negatively regulates CD36/GP4-mediated granule release. Phosphorylates MUC1 in the C-terminal and regulates the interaction between MUC1 and beta-catenin. The catalytic subunit phosphorylates 14-3-3 proteins (YWHAB, YWHAZ and YWHAH) in a sphingosine-dependent fashion. Phosphorylates ELAVL1 in response to angiotensin-2 treatment. Phosphorylates mitochondrial phospholipid scramblase 3 (PLSCR3), resulting in increased cardiolipin expression on the mitochondrial outer membrane which facilitates apoptosis. Phosphorylates SMPD1 which induces SMPD1 secretion. The protein is Protein kinase C delta type of Homo sapiens (Human).